The primary structure comprises 309 residues: Putative S-adenosyl-L-methionine-dependent methyltransferase Mflv_0743 (309 aa).

Residues aspartate 134 and 163–164 contribute to the S-adenosyl-L-methionine site; that span reads DL.

Belongs to the UPF0677 family.

In terms of biological role, exhibits S-adenosyl-L-methionine-dependent methyltransferase activity. The chain is Putative S-adenosyl-L-methionine-dependent methyltransferase Mflv_0743 from Mycolicibacterium gilvum (strain PYR-GCK) (Mycobacterium gilvum (strain PYR-GCK)).